The following is a 184-amino-acid chain: C-phycoerythrin class 1 subunit beta (184 aa).

(2R,3E)-phycoerythrobilin-binding residues include C50 and C61. N72 is modified (N4-methylasparagine). C82 and C165 together coordinate (2R,3E)-phycoerythrobilin.

This sequence belongs to the phycobiliprotein family. In terms of assembly, heterodimer of an alpha and a beta chain. In terms of processing, contains three covalently linked bilin chromophores.

It is found in the cellular thylakoid membrane. Light-harvesting photosynthetic bile pigment-protein from the phycobiliprotein complex. In Synechococcus sp. (strain WH7803), this protein is C-phycoerythrin class 1 subunit beta (cpeB).